The chain runs to 113 residues: Large ribosomal subunit protein P2 (113 aa).

The segment at 62–113 (LASVPSGGAGGAAASGGAAAAGGSAQAEAAPEAAKEEEKEESDEDMGFGLFD) is disordered. Over residues 76 to 93 (SGGAAAAGGSAQAEAAPE) the composition is skewed to low complexity. Ser103 carries the phosphoserine modification.

This sequence belongs to the eukaryotic ribosomal protein P1/P2 family. P1 and P2 exist as dimers at the large ribosomal subunit.

Its function is as follows. Plays an important role in the elongation step of protein synthesis. In Alternaria alternata (Alternaria rot fungus), this protein is Large ribosomal subunit protein P2 (ALTA5).